The sequence spans 256 residues: Glucanase inhibitor protein 2 (256 aa).

Positions Met-1 to Gly-15 are cleaved as a signal peptide. The Peptidase S1 domain maps to Ile-27–Lys-254. Cysteines 54 and 70 form a disulfide. 4 N-linked (GlcNAc...) asparagine glycosylation sites follow: Asn-87, Asn-102, Asn-107, and Asn-157. 2 disulfides stabilise this stretch: Cys-177-Cys-189 and Cys-199-Cys-230.

It belongs to the peptidase S1 family. As to quaternary structure, forms an apoplastic complex with host endoglucanases in tomato leaves during P.infestans infection.

The protein resides in the secreted. Its function is as follows. Secreted effector that suppresses host plant glucan elicitor-mediated defense responses. Targets host endoglucanases and inhibits the endoglucanase-mediated release of elicitor-active glucan oligosaccharides from P.infestans cell walls. In Phytophthora infestans (Potato late blight agent), this protein is Glucanase inhibitor protein 2.